Reading from the N-terminus, the 78-residue chain is uncharacterized protein (78 aa).

Positions 51 to 78 (GGKWDGGGSGGKWNGGGGSGGGSWKKWN) are disordered.

This is an uncharacterized protein from Dictyostelium discoideum (Social amoeba).